We begin with the raw amino-acid sequence, 775 residues long: Mitochondrial 15S rRNA processing factor CCM1 (775 aa).

The transit peptide at 1 to 18 directs the protein to the mitochondrion; that stretch reads MLRYARTVRFSQVGNSVR. Positions 35-65 are disordered; it reads HDRKSPSHSLSPISNLPNHNDSSTERARKTL. The span at 41 to 55 shows a compositional bias: polar residues; the sequence is SHSLSPISNLPNHND. Residues 56–65 show a composition bias toward basic and acidic residues; the sequence is SSTERARKTL. PPR repeat units lie at residues 289–323, 324–355, 362–396, 397–432, and 433–467; these read PKRT…KIEI, SGMA…MRFQ, GTRA…KIEP, NQQI…NWTP, and TLPT…NTVS.

This sequence belongs to the CCM1 family. Binds to mitochondrial small subunit 15S rRNA.

The protein localises to the mitochondrion. Functionally, regulates mitochondrial small subunit maturation by controlling 15S rRNA 5'-end processing. Localizes to the 5' precursor of the 15S rRNA in a position that is subsequently occupied by mS47 in the mature yeast mtSSU. Uses structure and sequence-specific RNA recognition, binding to a single-stranded region of the precursor and specifically recognizing bases -6 to -1. The exchange of Ccm1 for mS47 is coupled to the irreversible removal of precursor rRNA that is accompanied by conformational changes of the mitoribosomal proteins uS5m and mS26. These conformational changes signal completion of 5'-end rRNA processing through protection of the mature 5'-end of the 15S rRNA and stabilization of mS47. The removal of the 5' precursor together with the dissociation of Ccm1 may be catalyzed by the 5'-3' exoribonuclease Pet127. Involved in the specific removal of group I introns in mitochondrial encoded transcripts. In Scheffersomyces stipitis (strain ATCC 58785 / CBS 6054 / NBRC 10063 / NRRL Y-11545) (Yeast), this protein is Mitochondrial 15S rRNA processing factor CCM1 (CCM1).